Here is a 514-residue protein sequence, read N- to C-terminus: 2,3-bisphosphoglycerate-independent phosphoglycerate mutase (514 aa).

Mn(2+)-binding residues include Asp-14 and Ser-64. Ser-64 functions as the Phosphoserine intermediate in the catalytic mechanism. Substrate is bound by residues His-125, 155-156, Arg-187, Arg-193, 263-266, and Lys-337; these read RD and RADR. Mn(2+) is bound by residues Asp-404, His-408, Asp-445, His-446, and His-463.

Belongs to the BPG-independent phosphoglycerate mutase family. As to quaternary structure, monomer. Mn(2+) is required as a cofactor.

The catalysed reaction is (2R)-2-phosphoglycerate = (2R)-3-phosphoglycerate. It functions in the pathway carbohydrate degradation; glycolysis; pyruvate from D-glyceraldehyde 3-phosphate: step 3/5. In terms of biological role, catalyzes the interconversion of 2-phosphoglycerate and 3-phosphoglycerate. This Hahella chejuensis (strain KCTC 2396) protein is 2,3-bisphosphoglycerate-independent phosphoglycerate mutase.